The following is a 115-amino-acid chain: Flagellar transcriptional regulator FlhD (115 aa).

The protein belongs to the FlhD family. In terms of assembly, homodimer; disulfide-linked. Forms a heterohexamer composed of two FlhC and four FlhD subunits. Each FlhC binds a FlhD dimer, forming a heterotrimer, and a hexamer assembles by dimerization of two heterotrimers.

It localises to the cytoplasm. Its function is as follows. Functions in complex with FlhC as a master transcriptional regulator that regulates transcription of several flagellar and non-flagellar operons by binding to their promoter region. Activates expression of class 2 flagellar genes, including fliA, which is a flagellum-specific sigma factor that turns on the class 3 genes. Also regulates genes whose products function in a variety of physiological pathways. In Edwardsiella ictaluri (strain 93-146), this protein is Flagellar transcriptional regulator FlhD.